Here is a 425-residue protein sequence, read N- to C-terminus: MAGWTVCVDFLYTGDKMLEDACAVISGERVERVHTGGFRGQPDLDLRGRSSLALPGVIDMHVHLRGLKLSYKEDEVSGTAAAASGCVTLVADMPNTQPPLRTPEALREKLASLEAGAKVDYTVYAGVPRSYGEAVEMASMGIAGFKIYPEDLVNLDSIKNVLEAAEEAGILVVLHPESHDMFAGPDYGWLRRVARPCHAEAASVELLHDAARECGCKPRVHITHASCPATVVESKKRGFTVDVTPHHLFLSEEEVAGPTHSWGKVNPPLRGVGERSLLTQLTIEGLVDAIASDHAPHSTWEKWMHPAIAPPGFPWLEWWPGFTAARLMRAVGLERFYSMVSQTPSTILGVGDRCLWDGCPATISVLQLERTRVYHKGYTKALYTPVLGMESFDCAATVIRGKIAYTAWEGVRGGATGVLATRVVH.

Zn(2+) contacts are provided by H61 and H63. Residues 63–65 (HLR) and N95 contribute to the substrate site. 4 residues coordinate Zn(2+): K146, H175, H224, and D293. An N6-carboxylysine modification is found at K146. D293 is an active-site residue. Residues H297 and 311 to 312 (PG) contribute to the substrate site.

This sequence belongs to the metallo-dependent hydrolases superfamily. DHOase family. Class I DHOase subfamily. Zn(2+) is required as a cofactor.

The catalysed reaction is (S)-dihydroorotate + H2O = N-carbamoyl-L-aspartate + H(+). It functions in the pathway pyrimidine metabolism; UMP biosynthesis via de novo pathway; (S)-dihydroorotate from bicarbonate: step 3/3. Functionally, catalyzes the reversible cyclization of carbamoyl aspartate to dihydroorotate. The chain is Dihydroorotase from Aeropyrum pernix (strain ATCC 700893 / DSM 11879 / JCM 9820 / NBRC 100138 / K1).